The primary structure comprises 521 residues: Bifunctional purine biosynthesis protein PurH (521 aa).

The 145-residue stretch at 1-145 (MIKQALISVS…KNHRDVTVIV (145 aa)) folds into the MGS-like domain.

Belongs to the PurH family.

It catalyses the reaction (6R)-10-formyltetrahydrofolate + 5-amino-1-(5-phospho-beta-D-ribosyl)imidazole-4-carboxamide = 5-formamido-1-(5-phospho-D-ribosyl)imidazole-4-carboxamide + (6S)-5,6,7,8-tetrahydrofolate. The catalysed reaction is IMP + H2O = 5-formamido-1-(5-phospho-D-ribosyl)imidazole-4-carboxamide. It participates in purine metabolism; IMP biosynthesis via de novo pathway; 5-formamido-1-(5-phospho-D-ribosyl)imidazole-4-carboxamide from 5-amino-1-(5-phospho-D-ribosyl)imidazole-4-carboxamide (10-formyl THF route): step 1/1. It functions in the pathway purine metabolism; IMP biosynthesis via de novo pathway; IMP from 5-formamido-1-(5-phospho-D-ribosyl)imidazole-4-carboxamide: step 1/1. The sequence is that of Bifunctional purine biosynthesis protein PurH from Burkholderia multivorans (strain ATCC 17616 / 249).